We begin with the raw amino-acid sequence, 792 residues long: Homeobox protein HAZ1 (792 aa).

A disordered region spans residues 1–154 (MDKTTTSDLV…RPPKGGTPKD (154 aa)). A compositionally biased stretch (polar residues) spans 15–36 (NIGSNAGSAQEPLTTNGKTSGV). Residues 38–49 (NRYKQTVKRGRK) are compositionally biased toward basic residues. Positions 51–67 (SQISPSKTYPLRSSHSN) are enriched in polar residues. Positions 95-104 (VAKKRKRSKP) are enriched in basic residues. Over residues 116–127 (TSEKKNKAHNEL) the composition is skewed to basic and acidic residues. The PHD-type zinc finger occupies 244–301 (DIFCAACGSKDVTLKNDIILCDGICDRGFHQYCLNPPLLAEDIPQGDEGWLCPACDCK). 2 disordered regions span residues 338–495 (QIDA…NSNL) and 529–599 (YGKA…SDQQ). Over residues 345-354 (PSDDSADNDY) the composition is skewed to acidic residues. The span at 362–371 (HKVDEEKSSG) shows a compositional bias: basic and acidic residues. Acidic residues-rich tracts occupy residues 373–389 (DGGEGLDSDDSSSEDSE) and 433–453 (DESNSDQSDESDFTSDSDDFC). Residues 610-669 (STAKNRHFGPAINQKLKAHFKEDPYPSRATKENLAQELGLTFNQVTKWFSSTRHYARVAA) constitute a DNA-binding region (homeobox). Disordered regions lie at residues 677 to 697 (ENHTAENNNNTNTVDSIQLRG) and 711 to 792 (SEER…KTGR). 2 stretches are compositionally biased toward polar residues: residues 716–737 (GQSNLNEGTPLRSDTSCGQSVA) and 746–760 (NQGNDSSSNVRTPNA). Positions 774 to 792 (DEARRKAVQRELRKMKTGR) are enriched in basic and acidic residues.

This sequence belongs to the PHD-associated homeobox family. Expressed in roots, leaves, stems, panicle and seeds.

The protein localises to the nucleus. Transcriptional repressor involved in the regulation of gibberrelin (GA) signaling. Binds to the 5'-GATC-3' motif of HD16/EL1 promoter. Functions as a positive regulator of GA signaling by suppressing the expression of HD16/EL1, a negative regulator of GA signaling. This is Homeobox protein HAZ1 from Oryza sativa subsp. japonica (Rice).